The primary structure comprises 637 residues: 1-deoxy-D-xylulose-5-phosphate synthase (637 aa).

Thiamine diphosphate is bound by residues H82 and 123-125 (GHA). Residue D154 participates in Mg(2+) binding. Residues 155–156 (GS), N183, Y295, and E378 contribute to the thiamine diphosphate site. N183 lines the Mg(2+) pocket.

The protein belongs to the transketolase family. DXPS subfamily. As to quaternary structure, homodimer. Mg(2+) is required as a cofactor. Thiamine diphosphate serves as cofactor.

It catalyses the reaction D-glyceraldehyde 3-phosphate + pyruvate + H(+) = 1-deoxy-D-xylulose 5-phosphate + CO2. Its pathway is metabolic intermediate biosynthesis; 1-deoxy-D-xylulose 5-phosphate biosynthesis; 1-deoxy-D-xylulose 5-phosphate from D-glyceraldehyde 3-phosphate and pyruvate: step 1/1. In terms of biological role, catalyzes the acyloin condensation reaction between C atoms 2 and 3 of pyruvate and glyceraldehyde 3-phosphate to yield 1-deoxy-D-xylulose-5-phosphate (DXP). The sequence is that of 1-deoxy-D-xylulose-5-phosphate synthase from Lawsonia intracellularis (strain PHE/MN1-00).